The chain runs to 265 residues: 5'-nucleotidase SurE (265 aa).

A divalent metal cation is bound by residues Asp8, Asp9, Ser39, and Asn96.

The protein belongs to the SurE nucleotidase family. It depends on a divalent metal cation as a cofactor.

The protein localises to the cytoplasm. The enzyme catalyses a ribonucleoside 5'-phosphate + H2O = a ribonucleoside + phosphate. In terms of biological role, nucleotidase that shows phosphatase activity on nucleoside 5'-monophosphates. In Dehalococcoides mccartyi (strain ATCC BAA-2266 / KCTC 15142 / 195) (Dehalococcoides ethenogenes (strain 195)), this protein is 5'-nucleotidase SurE.